Here is a 499-residue protein sequence, read N- to C-terminus: Bifunctional purine biosynthesis protein PurH (499 aa).

The 144-residue stretch at 1-144 (MINRALISVY…KNFKDVIVVT (144 aa)) folds into the MGS-like domain.

The protein belongs to the PurH family.

The catalysed reaction is (6R)-10-formyltetrahydrofolate + 5-amino-1-(5-phospho-beta-D-ribosyl)imidazole-4-carboxamide = 5-formamido-1-(5-phospho-D-ribosyl)imidazole-4-carboxamide + (6S)-5,6,7,8-tetrahydrofolate. The enzyme catalyses IMP + H2O = 5-formamido-1-(5-phospho-D-ribosyl)imidazole-4-carboxamide. It participates in purine metabolism; IMP biosynthesis via de novo pathway; 5-formamido-1-(5-phospho-D-ribosyl)imidazole-4-carboxamide from 5-amino-1-(5-phospho-D-ribosyl)imidazole-4-carboxamide (10-formyl THF route): step 1/1. Its pathway is purine metabolism; IMP biosynthesis via de novo pathway; IMP from 5-formamido-1-(5-phospho-D-ribosyl)imidazole-4-carboxamide: step 1/1. This chain is Bifunctional purine biosynthesis protein PurH, found in Clostridium kluyveri (strain NBRC 12016).